The sequence spans 184 residues: Photosystem I assembly protein Ycf4 (184 aa).

Transmembrane regions (helical) follow at residues 21–41 (YFWA…GLSS) and 63–83 (IIMT…WLTI).

This sequence belongs to the Ycf4 family.

It is found in the plastid. It localises to the chloroplast thylakoid membrane. Functionally, seems to be required for the assembly of the photosystem I complex. The protein is Photosystem I assembly protein Ycf4 of Gracilaria tenuistipitata var. liui (Red alga).